The primary structure comprises 573 residues: Amino-acid permease inda1 (573 aa).

11 consecutive transmembrane segments (helical) span residues 72–92 (MIAI…GALA), 99–117 (LFVD…VYAL), 176–200 (ITTA…ALGY), 212–229 (LAAT…VLGG), 257–280 (GFCS…LAAA), 296–315 (VFWR…GLLI), 351–371 (FMNL…VYGG), 398–415 (LPSV…YVSL), 425–444 (WLLA…VCLA), 470–494 (VYGS…AIAA), and 511–527 (YLAA…GWLW).

Belongs to the amino acid-polyamine-organocation (APC) superfamily.

It is found in the membrane. The sequence is that of Amino-acid permease inda1 (inda1) from Hypocrea atroviridis (Trichoderma atroviride).